A 628-amino-acid polypeptide reads, in one-letter code: Kelch-like protein diablo (628 aa).

Residues 1-56 are disordered; the sequence is MGDLPGSTGGGSGPAAAGNASGNSSSAGNTGLGVAGTTGVDRPPSPARLSHTSEKH. Residues 14 to 29 are compositionally biased toward low complexity; the sequence is PAAAGNASGNSSSAGN. The region spanning 74-141 is the BTB domain; that stretch reads CDVVLNVGGR…CYTAHIIVEE (68 aa). The region spanning 176-278 is the BACK domain; sequence CLGIRAFADT…SPKFLVGTVG (103 aa). 6 Kelch repeats span residues 325-371, 373-419, 420-466, 468-513, 515-560, and 561-607; these read VLFA…VLND, LYAV…VLDG, FLYA…VLGG, LYAI…VFNN, IYAV…VVNG, and QLYA…VMRA.

The protein operates within protein modification; protein ubiquitination. In terms of biological role, probable substrate-specific adapter of an E3 ubiquitin-protein ligase complex which mediates the ubiquitination and subsequent proteasomal degradation of target proteins. May have a role in synapse differentiation and growth. This chain is Kelch-like protein diablo, found in Drosophila persimilis (Fruit fly).